The primary structure comprises 79 residues: Acyl carrier protein (79 aa).

The Carrier domain occupies 2–77; the sequence is SSIEDRVKKI…QAVDYIKKHL (76 aa). Serine 37 carries the O-(pantetheine 4'-phosphoryl)serine modification.

This sequence belongs to the acyl carrier protein (ACP) family. Post-translationally, 4'-phosphopantetheine is transferred from CoA to a specific serine of apo-ACP by AcpS. This modification is essential for activity because fatty acids are bound in thioester linkage to the sulfhydryl of the prosthetic group.

It is found in the cytoplasm. The protein operates within lipid metabolism; fatty acid biosynthesis. Functionally, carrier of the growing fatty acid chain in fatty acid biosynthesis. The sequence is that of Acyl carrier protein from Halorhodospira halophila (strain DSM 244 / SL1) (Ectothiorhodospira halophila (strain DSM 244 / SL1)).